A 296-amino-acid chain; its full sequence is Protoheme IX farnesyltransferase (296 aa).

The next 9 membrane-spanning stretches (helical) occupy residues 11–31 (PGII…AAQG), 35–55 (YPLF…GCVF), 84–104 (VTLV…YIAA), 107–127 (LAMW…SLYM), 132–152 (VYGT…GYCA), 162–182 (LILL…IAIF), 208–228 (ITLY…GGYA), 229–249 (GYKY…MALS), and 264–284 (LFVF…VDSM).

The protein belongs to the UbiA prenyltransferase family. Protoheme IX farnesyltransferase subfamily.

Its subcellular location is the cell inner membrane. The enzyme catalyses heme b + (2E,6E)-farnesyl diphosphate + H2O = Fe(II)-heme o + diphosphate. It participates in porphyrin-containing compound metabolism; heme O biosynthesis; heme O from protoheme: step 1/1. In terms of biological role, converts heme B (protoheme IX) to heme O by substitution of the vinyl group on carbon 2 of heme B porphyrin ring with a hydroxyethyl farnesyl side group. The chain is Protoheme IX farnesyltransferase from Pectobacterium carotovorum subsp. carotovorum (strain PC1).